Reading from the N-terminus, the 277-residue chain is Diaminopimelate epimerase (277 aa).

Positions 11 and 65 each coordinate substrate. Catalysis depends on cysteine 74, which acts as the Proton donor. Substrate is bound by residues 75 to 76, asparagine 180, and 198 to 199; these read GN and ER. The active-site Proton acceptor is the cysteine 208. 209–210 is a binding site for substrate; the sequence is GT.

Belongs to the diaminopimelate epimerase family. In terms of assembly, homodimer.

Its subcellular location is the cytoplasm. It carries out the reaction (2S,6S)-2,6-diaminopimelate = meso-2,6-diaminopimelate. It functions in the pathway amino-acid biosynthesis; L-lysine biosynthesis via DAP pathway; DL-2,6-diaminopimelate from LL-2,6-diaminopimelate: step 1/1. In terms of biological role, catalyzes the stereoinversion of LL-2,6-diaminopimelate (L,L-DAP) to meso-diaminopimelate (meso-DAP), a precursor of L-lysine and an essential component of the bacterial peptidoglycan. The polypeptide is Diaminopimelate epimerase (Gemmatimonas aurantiaca (strain DSM 14586 / JCM 11422 / NBRC 100505 / T-27)).